A 335-amino-acid polypeptide reads, in one-letter code: Beta-ketoacyl-[acyl-carrier-protein] synthase III (335 aa).

Residues Cys-116 and His-256 contribute to the active site. The tract at residues 257 to 261 (QANLR) is ACP-binding. Asn-286 is a catalytic residue.

It belongs to the thiolase-like superfamily. FabH family. Homodimer.

Its subcellular location is the cytoplasm. It catalyses the reaction malonyl-[ACP] + acetyl-CoA + H(+) = 3-oxobutanoyl-[ACP] + CO2 + CoA. It functions in the pathway lipid metabolism; fatty acid biosynthesis. Catalyzes the condensation reaction of fatty acid synthesis by the addition to an acyl acceptor of two carbons from malonyl-ACP. Catalyzes the first condensation reaction which initiates fatty acid synthesis and may therefore play a role in governing the total rate of fatty acid production. Possesses both acetoacetyl-ACP synthase and acetyl transacylase activities. Its substrate specificity determines the biosynthesis of branched-chain and/or straight-chain of fatty acids. The polypeptide is Beta-ketoacyl-[acyl-carrier-protein] synthase III (Porphyromonas gingivalis (strain ATCC BAA-308 / W83)).